The following is a 426-amino-acid chain: uncharacterized protein (426 aa).

Residues 23 to 42 (ENPRPTNNPSTSHPSDSYST) form a disordered region. The span at 26–42 (RPTNNPSTSHPSDSYST) shows a compositional bias: polar residues.

Belongs to the serpin family.

This is an uncharacterized protein from Thermococcus kodakarensis (strain ATCC BAA-918 / JCM 12380 / KOD1) (Pyrococcus kodakaraensis (strain KOD1)).